Reading from the N-terminus, the 467-residue chain is Neutral protease 2 homolog NFIA_031120 (467 aa).

A signal peptide spans 1–19; that stretch reads MKITALASAILAVVHGALA. The propeptide occupies 20–172; the sequence is LPARAPALDI…PASIKPLDRR (153 aa). 2 cysteine pairs are disulfide-bonded: cysteine 179–cysteine 251 and cysteine 258–cysteine 276. Histidine 300 contacts Zn(2+). Glutamate 301 is an active-site residue. Zn(2+) is bound by residues histidine 304 and aspartate 315. Residues 359–451 are compositionally biased toward polar residues; sequence WDGNSQPGQT…TMWDGSSEPG (93 aa). The interval 359–467 is disordered; that stretch reads WDGNSQPGQT…HTTWGNFYQA (109 aa).

This sequence belongs to the peptidase M35 family. Zn(2+) serves as cofactor.

Its subcellular location is the secreted. The catalysed reaction is Preferential cleavage of bonds with hydrophobic residues in P1'. Also 3-Asn-|-Gln-4 and 8-Gly-|-Ser-9 bonds in insulin B chain.. Its function is as follows. Secreted metalloproteinase that allows assimilation of proteinaceous substrates. Shows high activities on basic nuclear substrates such as histone and protamine. The protein is Neutral protease 2 homolog NFIA_031120 of Neosartorya fischeri (strain ATCC 1020 / DSM 3700 / CBS 544.65 / FGSC A1164 / JCM 1740 / NRRL 181 / WB 181) (Aspergillus fischerianus).